Reading from the N-terminus, the 974-residue chain is RING finger protein nhl-1 (974 aa).

A disordered region spans residues 1–29 (MSSSPQNEAEAREKMRELMSRPPSSRPAD). Basic and acidic residues predominate over residues 9 to 19 (AEAREKMRELM). The segment at 43–84 (CPICLDRYKQPKLLPCQHTFCYPCLESCADTLHRNLKCPECR) adopts an RING-type zinc-finger fold. Disordered regions lie at residues 360 to 395 (VKSD…IRYR) and 416 to 548 (SLLT…DFPV). The segment covering 416–431 (SLLTTSVTADSSSRTS) has biased composition (polar residues). Over residues 437–446 (RVTRSVEPTK) the composition is skewed to basic and acidic residues. Residues 447–465 (SRPTSLIVPNTETPRTVSP) are compositionally biased toward polar residues. The span at 488-501 (APLPQLPIRKPPLP) shows a compositional bias: pro residues. Residues 511–528 (LNEKVETIRRAHQQRQDA) show a composition bias toward basic and acidic residues. Residues 529–538 (SRAASRAVSS) are compositionally biased toward low complexity. NHL repeat units follow at residues 699-742 (RAVF…FDKD), 746-788 (VRQF…FGLE), 792-835 (LFSF…FDKN), 839-883 (IAKF…FDPH), 887-930 (LFSF…FDAQ), and 934-974 (VSSF…IQIF).

As to quaternary structure, interacts with ubc-13.

This Caenorhabditis elegans protein is RING finger protein nhl-1.